We begin with the raw amino-acid sequence, 191 residues long: Adenylate kinase (191 aa).

12 to 17 lines the ATP pocket; that stretch reads GSGKTT. The tract at residues 34-63 is NMP; the sequence is STGDLLRAESAKKTERGLLIEKFTSQGELV. Residues Thr35, Arg40, 61-63, 88-91, and Gln95 each bind AMP; these read ELV and GYPR. The interval 130–136 is LID; sequence GRSRGAD. An ATP-binding site is contributed by Arg131. Positions 133 and 145 each coordinate AMP. Position 173 (Arg173) interacts with ATP.

It belongs to the adenylate kinase family. Monomer.

The protein localises to the cytoplasm. The enzyme catalyses AMP + ATP = 2 ADP. It functions in the pathway purine metabolism; AMP biosynthesis via salvage pathway; AMP from ADP: step 1/1. Catalyzes the reversible transfer of the terminal phosphate group between ATP and AMP. Plays an important role in cellular energy homeostasis and in adenine nucleotide metabolism. The protein is Adenylate kinase of Helicobacter pylori (strain HPAG1).